The following is a 161-amino-acid chain: Ribosome maturation factor RimP (161 aa).

This sequence belongs to the RimP family.

It is found in the cytoplasm. In terms of biological role, required for maturation of 30S ribosomal subunits. The sequence is that of Ribosome maturation factor RimP from Rickettsia massiliae (strain Mtu5).